Consider the following 1529-residue polypeptide: Mediator of RNA polymerase II transcription subunit 1.1 (1529 aa).

3 disordered regions span residues 685–740, 807–919, and 933–1529; these read PDAA…VVGE, QYRM…MRDN, and PDIE…IDDE. A compositionally biased stretch (basic residues) spans 693–702; the sequence is GKQRKPRAKK. Composition is skewed to low complexity over residues 722–739 and 807–828; these read GAAA…GVVG and QYRM…PQQQ. Residues 894-905 show a composition bias toward pro residues; the sequence is TPSPLSAPPKPF. The span at 908–919 shows a compositional bias: basic and acidic residues; sequence EQHHFGTKMRDN. Composition is skewed to low complexity over residues 958 to 990 and 1008 to 1023; these read SSSS…TAQT and QEQA…IQQQ. Positions 1008–1032 form a coiled coil; that stretch reads QEQALQKQEQQRIQQQDSVDSTNSE. Polar residues-rich tracts occupy residues 1051–1061, 1068–1089, and 1096–1105; these read NQVNRVMNMSN, GSST…STGS, and TPGTSSNIAQ. Composition is skewed to basic and acidic residues over residues 1113–1130, 1137–1185, 1192–1240, and 1262–1278; these read LKKE…EKLI, LKVD…ERDK, RDRT…KELS, and PKKD…KDES. Residues 1169–1202 adopt a coiled-coil conformation; sequence EKEDKSQREKDKKERDKERKRRDRDRTEAKKEKD. The span at 1279-1288 shows a compositional bias: low complexity; that stretch reads IPGPSTSSES. Basic and acidic residues predominate over residues 1289-1304; the sequence is STRKEVAPAPISRKES. A compositionally biased stretch (low complexity) spans 1349 to 1365; it reads SYSGSSNAGPISSSSRG. 2 stretches are compositionally biased toward pro residues: residues 1375–1386 and 1477–1500; these read PVLPPPALPMRG and QPPP…APPS.

Belongs to the Mediator complex subunit 1 family. Component of the Mediator complex.

Its subcellular location is the nucleus. Its function is as follows. Component of the Mediator complex, a coactivator involved in the regulated transcription of nearly all RNA polymerase II-dependent genes. Mediator functions as a bridge to convey information from gene-specific regulatory proteins to the basal RNA polymerase II transcription machinery. Mediator is recruited to promoters by direct interactions with regulatory proteins and serves as a scaffold for the assembly of a functional preinitiation complex with RNA polymerase II and the general transcription factors. This Caenorhabditis briggsae protein is Mediator of RNA polymerase II transcription subunit 1.1 (sop-3).